The chain runs to 312 residues: Acetylglutamate kinase (312 aa).

Substrate is bound by residues 74–75, R96, and N195; that span reads GG.

Belongs to the acetylglutamate kinase family. ArgB subfamily.

Its subcellular location is the cytoplasm. It catalyses the reaction N-acetyl-L-glutamate + ATP = N-acetyl-L-glutamyl 5-phosphate + ADP. Its pathway is amino-acid biosynthesis; L-arginine biosynthesis; N(2)-acetyl-L-ornithine from L-glutamate: step 2/4. Functionally, catalyzes the ATP-dependent phosphorylation of N-acetyl-L-glutamate. In Nocardioides sp. (strain ATCC BAA-499 / JS614), this protein is Acetylglutamate kinase.